The sequence spans 982 residues: Glutamate [NMDA] receptor subunit 1 (982 aa).

A signal peptide spans 1-16; sequence MAFAVWFLSTFVIVAA. The Extracellular segment spans residues 17–561; that stretch reads QRHMALEHEG…TLVSFLQPFS (545 aa). 7 N-linked (GlcNAc...) asparagine glycosylation sites follow: Asn-247, Asn-303, Asn-334, Asn-386, Asn-443, Asn-470, and Asn-490. Glycine contacts are provided by residues 518–520 and Arg-525; that span reads PLT. The chain crosses the membrane as a helical span at residues 562-582; that stretch reads NTLWILVMVSVHVVALVLYLL. At 583–639 the chain is on the cytoplasmic side; it reads DRFSPFGRFKLSHSDSNEEKALNLSSAVWFAWGVLLNSGIGEGTPRSFSARVLGMVW. Residues 640 to 660 traverse the membrane as a helical segment; that stretch reads AGFAMIIVASYTANLAAFLVL. At 661–819 the chain is on the extracellular side; that stretch reads ERPKTKLSGI…KTPNTLGLKN (159 aa). N-linked (GlcNAc...) asparagine glycosylation is present at Asn-681. Glycine-binding residues include Ser-691 and Asp-735. The chain crosses the membrane as a helical span at residues 820–840; sequence MAGVFILVGVGIAGGVGLIII. Over 841–982 the chain is Cytoplasmic; the sequence is EVIYKKHQVK…YTSDVSHLVV (142 aa). A disordered region spans residues 934–982; sequence EIGKPGQSPKVIGGPPHPMLGKTRPQAQQNLLPPRYSPGYTSDVSHLVV. Polar residues predominate over residues 972 to 982; the sequence is GYTSDVSHLVV.

Belongs to the glutamate-gated ion channel (TC 1.A.10.1) family. In terms of assembly, forms a heteromeric NMDA channel with Nmdar2.

It localises to the cell membrane. The protein resides in the postsynaptic cell membrane. The protein localises to the postsynaptic density. NMDA receptor subtype of glutamate-gated ion channels with high calcium permeability and voltage-dependent sensitivity to magnesium. Mediated by glycine. This protein plays a key role in synaptic plasticity, synaptogenesis, excitotoxicity, memory acquisition and learning. It mediates neuronal functions in glutamate neurotransmission. Is involved in the cell surface targeting of NMDA receptors. Plays a role in associative learning and in long-term memory consolidation. This is Glutamate [NMDA] receptor subunit 1 from Drosophila willistoni (Fruit fly).